The chain runs to 418 residues: FXa-directed anticoagulant (418 aa).

An N-terminal signal peptide occupies residues 1 to 19; sequence MNLKIAIIVICQLVYFTQG. Residues Asn-117, Asn-167, and Asn-286 are each glycosylated (N-linked (GlcNAc...) asparagine).

It belongs to the serpin family. In terms of assembly, interacts with host coagulation factor X/F10 (activated). Female salivary gland (at protein level).

It localises to the secreted. In terms of biological role, anticoagulant and antithrombotic serpin-type protein inhibiting host coagulation factor Xa (F10). Does not inhibit host uPA/urokinase-type plasminogen activator (PLAU), kallikrein, granzyme B (GZMB), matriptase, elastase, alpha-chymotrypsin, chymase, coagulation factor XIIa (F12), coagulation factor XIa (F11), plasmin (PLG), thrombin (F2), trypsin and cathepsin G (CTSG). Inhibits factor Xa-induced production of pro-inflammatory cytokines, such as MCP-1/CCL2, TNF-alpha/TNF, IL-1beta/IL1B, IL6, IL8/CXCL8 and IL18, in human endothelial cells. Inhibits factor Xa-induced up-regulation of protease-activated receptors (PARs) F2R, F2RL1 and F2RL2 in human endothelial cells. Prevents activation of host F2RL1 via inhibition of F2RL1 cleavage by host factor Xa. Inhibits factor Xa-induced up-regulation of adhesion molecules ICAM1 and VCAM1 in human endothelial cells. Inhibits factor Xa-induced up-regulation of phosphorylated ERK1/2 in human endothelial cells. Inhibits factor Xa-induced activation of transcription factor NF-kappa-B in human endothelial cells. Reduces factor Xa-induced edema in the host. Reduces factor Xa-induced endothelial permeability in the host. The chain is FXa-directed anticoagulant from Aedes albopictus (Asian tiger mosquito).